The following is a 250-amino-acid chain: 5-oxoprolinase subunit A (250 aa).

It belongs to the LamB/PxpA family. As to quaternary structure, forms a complex composed of PxpA, PxpB and PxpC.

The enzyme catalyses 5-oxo-L-proline + ATP + 2 H2O = L-glutamate + ADP + phosphate + H(+). Functionally, catalyzes the cleavage of 5-oxoproline to form L-glutamate coupled to the hydrolysis of ATP to ADP and inorganic phosphate. The sequence is that of 5-oxoprolinase subunit A from Klebsiella pneumoniae (strain 342).